A 151-amino-acid polypeptide reads, in one-letter code: Succinate dehydrogenase subunit 4, mitochondrial (151 aa).

The N-terminal 78 residues, Met-1–Ser-78, are a transit peptide targeting the mitochondrion. His-109 lines the heme pocket. Tyr-121 is a binding site for a ubiquinone. The helical transmembrane segment at Leu-130–Leu-150 threads the bilayer.

As to quaternary structure, component of complex II composed of eight subunits in plants: four classical SDH subunits SDH1, SDH2, SDH3 and SDH4 (a flavoprotein (FP), an iron-sulfur protein (IP), and a cytochrome b composed of a large and a small subunit.), as well as four subunits unknown in mitochondria from bacteria and heterotrophic eukaryotes. It depends on heme as a cofactor. Expressed in flowers, inflorescences and stems.

It localises to the mitochondrion inner membrane. Its pathway is carbohydrate metabolism; tricarboxylic acid cycle. Functionally, membrane-anchoring subunit of succinate dehydrogenase (SDH). The sequence is that of Succinate dehydrogenase subunit 4, mitochondrial from Arabidopsis thaliana (Mouse-ear cress).